Reading from the N-terminus, the 472-residue chain is Inactive CLIP domain-containing serine protease A3 (472 aa).

2 helical membrane passes run 51–71 (ISFVMCAIYYLQLYIKAWSSM) and 78–98 (LPALGVLILLGTTWTPVHTYA). 4 N-linked (GlcNAc...) asparagine glycosylation sites follow: Asn122, Asn133, Asn149, and Asn152. The Peptidase S1 domain occupies 223–470 (VAAAKAPAAG…YVPWITSTVS (248 aa)). Intrachain disulfides connect Cys354–Cys428, Cys386–Cys408, and Cys418–Cys446.

This sequence belongs to the peptidase S1 family. CLIP subfamily. Expressed at highest levels in head and salivary gland. Expressed in ovary and carcass. Minimal expression in midgut.

The protein resides in the membrane. Its function is as follows. Probable inactive serine protease. Induces migration of cultured mouse embryonic fibroblasts. (Microbial infection) Promotes dengue virus type 2 replication in the host. The sequence is that of Inactive CLIP domain-containing serine protease A3 from Aedes aegypti (Yellowfever mosquito).